The sequence spans 482 residues: ATP synthase subunit beta (482 aa).

161–168 provides a ligand contact to ATP; the sequence is GGAGVGKT.

This sequence belongs to the ATPase alpha/beta chains family. In terms of assembly, F-type ATPases have 2 components, CF(1) - the catalytic core - and CF(0) - the membrane proton channel. CF(1) has five subunits: alpha(3), beta(3), gamma(1), delta(1), epsilon(1). CF(0) has four main subunits: a(1), b(1), b'(1) and c(9-12).

It localises to the cellular thylakoid membrane. The enzyme catalyses ATP + H2O + 4 H(+)(in) = ADP + phosphate + 5 H(+)(out). Functionally, produces ATP from ADP in the presence of a proton gradient across the membrane. The catalytic sites are hosted primarily by the beta subunits. The protein is ATP synthase subunit beta of Microcystis aeruginosa (strain NIES-843 / IAM M-2473).